The following is a 1055-amino-acid chain: cAMP and cAMP-inhibited cGMP 3',5'-cyclic phosphodiesterase 10A (1055 aa).

3 disordered regions span residues 1–90 (MASL…RGGG), 151–193 (AAAA…GRRR), and 205–250 (LPAR…RPQG). Gly residues-rich tracts occupy residues 79 to 90 (GGPGALSARGGG) and 154 to 168 (AGGG…GGGQ). Positions 220 to 231 (PLGQAARRAGSP) are enriched in low complexity. Residues 232–243 (GFPGAGPGGGGQ) are compositionally biased toward gly residues. Thr282 is modified (phosphothreonine). GAF domains are found at residues 367–510 (DNQL…SVAI) and 542–688 (AIDS…ALAL). 3',5'-cyclic AMP contacts are provided by residues 562–563 (RC), 606–607 (IA), Thr640, Gln659, and His791. One can recognise a PDEase domain in the interval 718–1035 (TSEEWQGLMQ…SQWEKVIRGE (318 aa)). His791 serves as the catalytic Proton donor. His791 lines the 3',5'-cyclic GMP pocket. 4 residues coordinate a divalent metal cation: His795, His829, Asp830, and Asp940. Gln992 contacts 3',5'-cyclic AMP. A 3',5'-cyclic GMP-binding site is contributed by Gln992.

It belongs to the cyclic nucleotide phosphodiesterase family. Homodimer. It depends on a divalent metal cation as a cofactor. Phosphorylated on Thr-16. In terms of tissue distribution, abundant in the putamen and caudate nucleus regions of brain and testis, moderately expressed in the thyroid gland, pituitary gland, thalamus and cerebellum.

It is found in the cytoplasm. The protein resides in the cytosol. It catalyses the reaction a nucleoside 3',5'-cyclic phosphate + H2O = a nucleoside 5'-phosphate + H(+). It carries out the reaction 3',5'-cyclic AMP + H2O = AMP + H(+). The catalysed reaction is 3',5'-cyclic GMP + H2O = GMP + H(+). Its pathway is purine metabolism; 3',5'-cyclic AMP degradation; AMP from 3',5'-cyclic AMP: step 1/1. The protein operates within purine metabolism; 3',5'-cyclic GMP degradation; GMP from 3',5'-cyclic GMP: step 1/1. Its activity is regulated as follows. Inhibited by dipyridamole and moderately by IBMX. cGMP acts as an allosteric activator. Its function is as follows. Plays a role in signal transduction by regulating the intracellular concentration of cyclic nucleotides. Can hydrolyze both cAMP and cGMP, but has higher affinity for cAMP and is more efficient with cAMP as substrate. May play a critical role in regulating cAMP and cGMP levels in the striatum, a region of the brain that contributes to the control of movement and cognition. The polypeptide is cAMP and cAMP-inhibited cGMP 3',5'-cyclic phosphodiesterase 10A (PDE10A) (Homo sapiens (Human)).